Reading from the N-terminus, the 185-residue chain is Ribosome-recycling factor (185 aa).

This sequence belongs to the RRF family.

It localises to the cytoplasm. Its function is as follows. Responsible for the release of ribosomes from messenger RNA at the termination of protein biosynthesis. May increase the efficiency of translation by recycling ribosomes from one round of translation to another. The chain is Ribosome-recycling factor from Pasteurella multocida (strain Pm70).